The chain runs to 154 residues: Protein X (154 aa).

The segment at 28–48 is disordered; sequence RTLPGSLGAVPPPSSSAVPAD. Over residues 30-46 the composition is skewed to low complexity; that stretch reads LPGSLGAVPPPSSSAVP. The segment at 68 to 117 is mitochondrial targeting sequence; the sequence is PCALRFTSARRMETTVNAPWSLPTVLHKRTLGLSGRSMTWIEDYIKDCVF.

It belongs to the orthohepadnavirus protein X family. In terms of assembly, may form homodimer. May interact with host CEBPA, CFLAR, CREB1, DDB1, E4F1, HBXIP, HSPD1/HSP60, NFKBIA, POLR2E and SMAD4. Interacts with host SMC5-SMC6 complex and induces its degradation. Interacts with host TRPC4AP; leading to prevent ubiquitination of TRPC4AP. Interacts with host PLSCR1; this interaction promotes ubiquitination and degradation of HBx and impairs HBx-mediated cell proliferation. Post-translationally, a fraction may be phosphorylated in insect cells and HepG2 cells, a human hepatoblastoma cell line. Phosphorylated in vitro by host protein kinase C or mitogen-activated protein kinase. N-acetylated in insect cells.

Its subcellular location is the host cytoplasm. The protein resides in the host nucleus. It localises to the host mitochondrion. Functionally, multifunctional protein that plays a role in silencing host antiviral defenses and promoting viral transcription. Does not seem to be essential for HBV infection. May be directly involved in development of cirrhosis and liver cancer (hepatocellular carcinoma). Most of cytosolic activities involve modulation of cytosolic calcium. The effect on apoptosis is controversial depending on the cell types in which the studies have been conducted. May induce apoptosis by localizing in mitochondria and causing loss of mitochondrial membrane potential. May also modulate apoptosis by binding host CFLAR, a key regulator of the death-inducing signaling complex (DISC). Promotes viral transcription by using the host E3 ubiquitin ligase DDB1 to target the SMC5-SMC6 complex to proteasomal degradation. This host complex would otherwise bind to viral episomal DNA, and prevents its transcription. Moderately stimulates transcription of many different viral and cellular transcription elements. Promoters and enhancers stimulated by HBx contain DNA binding sites for NF-kappa-B, AP-1, AP-2, c-EBP, ATF/CREB, or the calcium-activated factor NF-AT. This is Protein X from Homo sapiens (Human).